Here is a 181-residue protein sequence, read N- to C-terminus: Protein Syd (181 aa).

It belongs to the Syd family.

Its subcellular location is the cell inner membrane. In terms of biological role, interacts with the SecY protein in vivo. May bind preferentially to an uncomplexed state of SecY, thus functioning either as a chelating agent for excess SecY in the cell or as a regulatory factor that negatively controls the translocase function. This chain is Protein Syd, found in Escherichia coli O157:H7.